The primary structure comprises 384 residues: 1-deoxy-D-xylulose 5-phosphate reductoisomerase (384 aa).

NADPH contacts are provided by threonine 10, glycine 11, serine 12, isoleucine 13, glycine 36, and asparagine 123. Residue lysine 124 coordinates 1-deoxy-D-xylulose 5-phosphate. Glutamate 125 is an NADPH binding site. Aspartate 149 serves as a coordination point for Mn(2+). Residues serine 150, glutamate 151, serine 175, and histidine 198 each contribute to the 1-deoxy-D-xylulose 5-phosphate site. Glutamate 151 lines the Mn(2+) pocket. Residue glycine 204 coordinates NADPH. 1-deoxy-D-xylulose 5-phosphate contacts are provided by serine 211, asparagine 216, lysine 217, and glutamate 220. Glutamate 220 contributes to the Mn(2+) binding site.

Belongs to the DXR family. The cofactor is Mg(2+). Mn(2+) serves as cofactor.

The enzyme catalyses 2-C-methyl-D-erythritol 4-phosphate + NADP(+) = 1-deoxy-D-xylulose 5-phosphate + NADPH + H(+). The protein operates within isoprenoid biosynthesis; isopentenyl diphosphate biosynthesis via DXP pathway; isopentenyl diphosphate from 1-deoxy-D-xylulose 5-phosphate: step 1/6. In terms of biological role, catalyzes the NADPH-dependent rearrangement and reduction of 1-deoxy-D-xylulose-5-phosphate (DXP) to 2-C-methyl-D-erythritol 4-phosphate (MEP). The protein is 1-deoxy-D-xylulose 5-phosphate reductoisomerase of Chlorobium phaeovibrioides (strain DSM 265 / 1930) (Prosthecochloris vibrioformis (strain DSM 265)).